The primary structure comprises 219 residues: Octanoyltransferase (219 aa).

Residues 37-219 form the BPL/LPL catalytic domain; that stretch reads EHSPDQLWIL…DFNDVQVILQ (183 aa). Residues 76-83, 143-145, and 156-158 each bind substrate; these read RGGQVTWH, SLG, and GLA. The active-site Acyl-thioester intermediate is Cys174.

It belongs to the LipB family.

The protein localises to the cytoplasm. It carries out the reaction octanoyl-[ACP] + L-lysyl-[protein] = N(6)-octanoyl-L-lysyl-[protein] + holo-[ACP] + H(+). It participates in protein modification; protein lipoylation via endogenous pathway; protein N(6)-(lipoyl)lysine from octanoyl-[acyl-carrier-protein]: step 1/2. Catalyzes the transfer of endogenously produced octanoic acid from octanoyl-acyl-carrier-protein onto the lipoyl domains of lipoate-dependent enzymes. Lipoyl-ACP can also act as a substrate although octanoyl-ACP is likely to be the physiological substrate. This is Octanoyltransferase from Acinetobacter baylyi (strain ATCC 33305 / BD413 / ADP1).